Consider the following 176-residue polypeptide: ADP-ribosylation factor-like protein 11 (176 aa).

G2 is lipidated: N-myristoyl glycine. GTP contacts are provided by residues 19–26 (GLDSAGKT), 63–67 (DIGGQ), and 122–125 (NKQE).

It belongs to the small GTPase superfamily. Arf family.

Functionally, may play a role in apoptosis. May act as a tumor suppressor. This Mus musculus (Mouse) protein is ADP-ribosylation factor-like protein 11 (Arl11).